The sequence spans 437 residues: Putrescine hydroxycinnamoyltransferase 3 (437 aa).

Residues His-151 and Asp-383 each act as proton acceptor in the active site.

Belongs to the plant acyltransferase family. Highly expressed in roots. Expressed at low levels in shoots and flowers.

Hydroxycinnamoyl transferase that catalyzes the transfer of an acyl from p-coumaryol-CoA to putrescine, to produce coumaroyl putrescine. Can use feruloyl-CoA and caffeoyl-CoA as acyl donors. The sequence is that of Putrescine hydroxycinnamoyltransferase 3 from Oryza sativa subsp. japonica (Rice).